The chain runs to 419 residues: Phospholipase A1-IIgamma (419 aa).

2 coiled-coil regions span residues 1–21 (MKRKKKEEEEEKLIVTREFAK) and 207–227 (NARDQVLREVGRLLEKYKDEE). The Acyl-ester intermediate role is filled by serine 236. Catalysis depends on charge relay system residues serine 236, aspartate 302, and histidine 339.

This sequence belongs to the AB hydrolase superfamily. Lipase family. As to expression, expressed in seedlings, stems and siliques, and, to a lower extent, in flowers.

It localises to the cytoplasm. Acylhydrolase that catalyzes the hydrolysis of 1,3-diacylglycerol (1,3-DAG) and 1-monoacylglycerol (1-MAG) at the sn-1 position. High activity toward 1,3-DAG and 1-MAG, but low activity toward 1,2-diacylglycerol (1,2-DAG) and 1-lysophosphatidylcholine (1-LPC), and no activity toward phosphatidylcholine (PC), monogalactosyldiacylglycerol (MGDG), digalactosyldiacylglycerol (DGDG), triacylglycerol (TAG) and 2-monoacylglycerol (2-MAG). May be involved in the negative regulation of seedling establishment by inhibiting the breakdown, beta-oxidation and mobilization of seed storage oils. The chain is Phospholipase A1-IIgamma (DSEL) from Arabidopsis thaliana (Mouse-ear cress).